We begin with the raw amino-acid sequence, 162 residues long: UPF0303 protein RL3365 (162 aa).

Belongs to the UPF0303 family.

In Rhizobium johnstonii (strain DSM 114642 / LMG 32736 / 3841) (Rhizobium leguminosarum bv. viciae), this protein is UPF0303 protein RL3365.